Here is a 67-residue protein sequence, read N- to C-terminus: Amphipathic peptide Tx348 (67 aa).

Positions 1–23 (MKSQAFFLLFLVVLLLATTQSEA) are cleaved as a signal peptide. Phe33 carries the post-translational modification Phenylalanine amide. The propeptide occupies 37-67 (SMRNMDTMKYLYDPSLSAADLKTLQKLMENY).

This sequence belongs to the non-disulfide-bridged peptide (NDBP) superfamily. Short antimicrobial peptide (group 4) family. Expressed by the venom gland.

It is found in the secreted. It localises to the target cell membrane. Amphipathic peptide that has antibacterial activities. The sequence is that of Amphipathic peptide Tx348 from Buthus israelis (Israeli scorpion).